The sequence spans 634 residues: RNA polymerase sigma factor RpoD (634 aa).

The segment at L177 to L202 is disordered. The span at P182–H197 shows a compositional bias: acidic residues. Residues M385 to T455 form a sigma-70 factor domain-2 region. Residues D409 to Q412 carry the Interaction with polymerase core subunit RpoC motif. The sigma-70 factor domain-3 stretch occupies residues E464–A541. A sigma-70 factor domain-4 region spans residues V554 to H607. Positions L580–S599 form a DNA-binding region, H-T-H motif. The segment at P608–A634 is disordered.

Belongs to the sigma-70 factor family. RpoD/SigA subfamily. As to quaternary structure, interacts transiently with the RNA polymerase catalytic core.

The protein resides in the cytoplasm. Its function is as follows. Sigma factors are initiation factors that promote the attachment of RNA polymerase to specific initiation sites and are then released. This sigma factor is the primary sigma factor during exponential growth. In Rickettsia conorii (strain ATCC VR-613 / Malish 7), this protein is RNA polymerase sigma factor RpoD.